We begin with the raw amino-acid sequence, 524 residues long: Unconventional prefoldin RPB5 interactor (524 aa).

3 disordered regions span residues M1–P20, S284–S320, and V335–M373. A compositionally biased stretch (acidic residues) spans D296–S307. S361 carries the post-translational modification Phosphoserine; by RPS6KB1. S431 carries the post-translational modification Phosphoserine.

The protein belongs to the RNA polymerase II subunit 5-mediating protein family. Homodimer. Component of the PAQosome complex which is responsible for the biogenesis of several protein complexes and which consists of R2TP complex members RUVBL1, RUVBL2, RPAP3 and PIH1D1, URI complex members PFDN2, PFDN6, PDRG1, UXT and URI1 as well as ASDURF, POLR2E and DNAAF10/WDR92. Interacts with POLR2E/RPB5, RUVBL2 and RUVBL1. Interacts with PFDN2, PFDN4 and STAP1; the interactions are phosphorylation-dependent and occur in a growth-dependent manner in the mitochondrion. Interacts with UXT. Interacts with PPP1CC; the interaction is phosphorylation-dependent and occurs in a growth factor-dependent manner. Interacts (via the middle C-terminal region) with GTF2F1 and GTF2F2. Interacts with DMAP1. Interacts with TSC1 and TSC2. Interacts with PRPF8 and EFTUD2 in a ZNHIT2-dependent manner. Post-translationally, phosphorylated. Phosphorylation occurs essentially on serine residues. Phosphorylation occurs in response to androgen treatment in prostate cancer cells in a mTOR-dependent manner. Phosphorylated; hyperhosphorylated in mitochondria in a mTORC-dependent signaling pathway. Phosphorylated at Ser-361 by RPS6KB1 in a growth factor- and rapamycin-dependent manner. S6K1-mediated mitochondrial phosphorylation at Ser-361 disrupts the URI1-PPP1CC complex in the mitochondrion, relieves PPP1CC phosphatase inhibition activity and hence engages a negative feedback diminishing RPS6KB1 kinase activity, preventing sustained S6K1-dependent signaling.

The protein localises to the nucleus. The protein resides in the cytoplasm. It is found in the mitochondrion. Its subcellular location is the cell projection. It localises to the dendrite. In terms of biological role, involved in gene transcription regulation. Acts as a transcriptional repressor in concert with the corepressor UXT to regulate androgen receptor (AR) transcription. May act as a tumor suppressor to repress AR-mediated gene transcription and to inhibit anchorage-independent growth in prostate cancer cells. Required for cell survival in ovarian cancer cells. Together with UXT, associates with chromatin to the NKX3-1 promoter region. Its function is as follows. Plays a central role in maintaining S6K1 signaling and BAD phosphorylation under normal growth conditions thereby protecting cells from potential deleterious effects of sustained S6K1 signaling. The URI1-PPP1CC complex acts as a central component of a negative feedback mechanism that counteracts excessive S6K1 survival signaling to BAD in response to growth factors. Mediates inhibition of PPP1CC phosphatase activity in mitochondria. Coordinates the regulation of nutrient-sensitive gene expression availability in a mTOR-dependent manner. Seems to be a scaffolding protein able to assemble a prefoldin-like complex that contains PFDs and proteins with roles in transcription and ubiquitination. The chain is Unconventional prefoldin RPB5 interactor (URI1) from Bos taurus (Bovine).